Reading from the N-terminus, the 348-residue chain is D-erythrose-4-phosphate dehydrogenase (348 aa).

NAD(+) is bound by residues 12–13 (RI) and arginine 81. Residues 154 to 156 (SCT), arginine 200, 213 to 214 (TK), and arginine 236 each bind substrate. The Nucleophile role is filled by cysteine 155. NAD(+) is bound at residue asparagine 318.

The protein belongs to the glyceraldehyde-3-phosphate dehydrogenase family. Epd subfamily. Homotetramer.

It is found in the cytoplasm. It catalyses the reaction D-erythrose 4-phosphate + NAD(+) + H2O = 4-phospho-D-erythronate + NADH + 2 H(+). Its pathway is cofactor biosynthesis; pyridoxine 5'-phosphate biosynthesis; pyridoxine 5'-phosphate from D-erythrose 4-phosphate: step 1/5. Its function is as follows. Catalyzes the NAD-dependent conversion of D-erythrose 4-phosphate to 4-phosphoerythronate. The protein is D-erythrose-4-phosphate dehydrogenase of Salmonella paratyphi B (strain ATCC BAA-1250 / SPB7).